An 834-amino-acid chain; its full sequence is DIS3-like exonuclease 2 (834 aa).

The span at 1 to 23 (MHNSEFLSPVQSGTQRGTNRSIL) shows a compositional bias: polar residues. The interval 1–35 (MHNSEFLSPVQSGTQRGTNRSILNNKKSGKGKKKS) is disordered. Asp354 and Asp363 together coordinate Mg(2+).

This sequence belongs to the RNR ribonuclease family. DIS3L2 subfamily. Requires Mg(2+) as cofactor. It depends on Mn(2+) as a cofactor.

The protein localises to the cytoplasm. It localises to the P-body. Functionally, 3'-5'-exoribonuclease that specifically recognizes RNAs polyuridylated at their 3' end and mediates their degradation. Component of an exosome-independent RNA degradation pathway that mediates degradation of both mRNAs and miRNAs that have been polyuridylated by a terminal uridylyltransferase. Essential for correct mitosis, and negatively regulates cell proliferation. The sequence is that of DIS3-like exonuclease 2 from Xenopus tropicalis (Western clawed frog).